The chain runs to 514 residues: MQQLNPSEISEIIKSRIAKLDTSTEARNEGTVVSVSDGIVRIHGLADVMFGEMIEFEGGIYGMALNLEQDSVGAVVLGDYLGLAEGQKVRCTGRILEVPTGPEMLGRVVDALGNPIDGKGPIEAKQTDAVEKVAPGVIWRREVNEPVQTGYKSIDAMVPIGRGQRELIIGDRQIGKTAVAVDAIINQKDSGIKCVYVAIGQKQSTIANVVRKLEEHGAMENTIIVAASASDPASMQFLAPFAGCTMGEYFRDRGEDALIVYDDLTKQAWAYRQISLLLRRPPGREAYPGDVFYLHSRLLERAAKVNEDYVEKFTNGEVKGKTGSLTALPIIETQGGDVSAFVPTNVISITDGQIFLETDLFNSGIRPAMNAGVSVSRVGGAAQTKIVKKLGGGIRLALAQYRELAAFAQFASDLDDSTREQLEHGQAVTELMKQKQYSPMSVAEMGVVLYAANEGYLKGMEVEKIGAFEAALLDYMNSEKKALMDKINEKGDYNGEIEAEIKESLDQFKATQTW.

170 to 177 lines the ATP pocket; that stretch reads GDRQIGKT.

The protein belongs to the ATPase alpha/beta chains family. F-type ATPases have 2 components, CF(1) - the catalytic core - and CF(0) - the membrane proton channel. CF(1) has five subunits: alpha(3), beta(3), gamma(1), delta(1), epsilon(1). CF(0) has three main subunits: a(1), b(2) and c(9-12). The alpha and beta chains form an alternating ring which encloses part of the gamma chain. CF(1) is attached to CF(0) by a central stalk formed by the gamma and epsilon chains, while a peripheral stalk is formed by the delta and b chains.

Its subcellular location is the cell inner membrane. The catalysed reaction is ATP + H2O + 4 H(+)(in) = ADP + phosphate + 5 H(+)(out). Its function is as follows. Produces ATP from ADP in the presence of a proton gradient across the membrane. The alpha chain is a regulatory subunit. The chain is ATP synthase subunit alpha from Alcanivorax borkumensis (strain ATCC 700651 / DSM 11573 / NCIMB 13689 / SK2).